The sequence spans 242 residues: Segregation and condensation protein A (242 aa).

Belongs to the ScpA family. In terms of assembly, component of a cohesin-like complex composed of ScpA, ScpB and the Smc homodimer, in which ScpA and ScpB bind to the head domain of Smc. The presence of the three proteins is required for the association of the complex with DNA.

It is found in the cytoplasm. Functionally, participates in chromosomal partition during cell division. May act via the formation of a condensin-like complex containing Smc and ScpB that pull DNA away from mid-cell into both cell halves. The protein is Segregation and condensation protein A of Streptococcus mitis.